Reading from the N-terminus, the 274-residue chain is Rhamnulose-1-phosphate aldolase (274 aa).

The active site involves Glu-117. Residues His-141, His-143, and His-212 each coordinate Zn(2+).

This sequence belongs to the aldolase class II family. RhaD subfamily. As to quaternary structure, homotetramer. It depends on Zn(2+) as a cofactor.

It localises to the cytoplasm. The catalysed reaction is L-rhamnulose 1-phosphate = (S)-lactaldehyde + dihydroxyacetone phosphate. It participates in carbohydrate degradation; L-rhamnose degradation; glycerone phosphate from L-rhamnose: step 3/3. In terms of biological role, catalyzes the reversible cleavage of L-rhamnulose-1-phosphate to dihydroxyacetone phosphate (DHAP) and L-lactaldehyde. The protein is Rhamnulose-1-phosphate aldolase of Escherichia coli O7:K1 (strain IAI39 / ExPEC).